Here is a 164-residue protein sequence, read N- to C-terminus: Interferon gamma (164 aa).

The N-terminal stretch at M1 to G19 is a signal peptide. N-linked (GlcNAc...) asparagine glycans are attached at residues N42, N61, and N95.

The protein belongs to the type II (or gamma) interferon family. As to quaternary structure, homodimer.

The protein resides in the secreted. Functionally, produced by lymphocytes activated by specific antigens or mitogens. IFN-gamma, in addition to having antiviral activity, has important immunoregulatory functions. It is a potent activator of macrophages, it has antiproliferative effects on transformed cells and it can potentiate the antiviral and antitumor effects of the type I interferons. In Anas platyrhynchos (Mallard), this protein is Interferon gamma (IFNG).